A 470-amino-acid polypeptide reads, in one-letter code: Nuclear receptor ROR-beta (470 aa).

A DNA-binding region (nuclear receptor) is located at residues 18-93; it reads VIPCKICGDK…LGMSRDAVKF (76 aa). 2 NR C4-type zinc fingers span residues 21–41 and 57–81; these read CKIC…CEGC and CPRQ…LQKC. Over residues 104–117 the composition is skewed to basic and acidic residues; that stretch reads LYAEVQKHQQRLQE. A disordered region spans residues 104–127; it reads LYAEVQKHQQRLQEQRQQQSGEAE. Residues 222–460 enclose the NR LBD domain; it reads EIDRIAQNII…TLFPPLYKEL (239 aa). The short motif at 456-461 is the AF-2 element; sequence LYKELF.

This sequence belongs to the nuclear hormone receptor family. NR1 subfamily. In terms of assembly, monomer. Interacts with CRX. Expressed in inner and outer neuroblastic layer as well as in the ganglion cell layer of the developing retina. Expressed in bone marrow osteoprogenitor cells.

The protein resides in the nucleus. The protein localises to the nucleoplasm. Functionally, nuclear receptor that binds DNA as a monomer to ROR response elements (RORE) containing a single core motif half-site 5'-AGGTCA-3' preceded by a short A-T-rich sequence. Considered to have intrinsic transcriptional activity, have some natural ligands such as all-trans retinoic acid (ATRA) and other retinoids which act as inverse agonists repressing the transcriptional activity. Required for normal postnatal development of rod and cone photoreceptor cells. Modulates rod photoreceptors differentiation at least by inducing the transcription factor NRL-mediated pathway. In cone photoreceptor cells, regulates transcription of OPN1SW. Involved in the regulation of the period length and stability of the circadian rhythm. May control cytoarchitectural patterning of neocortical neurons during development. May act in a dose-dependent manner to regulate barrel formation upon innervation of layer IV neurons by thalamocortical axons. May play a role in the suppression of osteoblastic differentiation through the inhibition of RUNX2 transcriptional activity. In terms of biological role, isoform 1 is critical for hindlimb motor control and for the differentiation of amacrine and horizontal cells in the retina. Regulates the expression of PTF1A synergistically with FOXN4. This is Nuclear receptor ROR-beta (Rorb) from Mus musculus (Mouse).